A 211-amino-acid polypeptide reads, in one-letter code: Claudin-1 (211 aa).

Topologically, residues 1–7 (MANAGLQ) are cytoplasmic. A helical transmembrane segment spans residues 8-28 (LLGFILASLGWIGSIVSTALP). Residues 29-81 (QWKIYSYAGDNIVTAQAIYEGLWMSCVSQSTGQIQCKVFDSLLNLNSTLQATR) are Extracellular-facing. Cys-54 and Cys-64 are oxidised to a cystine. The chain crosses the membrane as a helical span at residues 82–102 (ALMVIGILLGLIAIFVSTIGM). Over 103–115 (KCMRCLEDDEVQK) the chain is Cytoplasmic. A helical transmembrane segment spans residues 116-136 (MWMAVIGGIIFLISGLATLVA). Topologically, residues 137–163 (TAWYGNRIVQEFYDPLTPINARYEFGQ) are extracellular. Residues 164–184 (ALFTGWAAASLCLLGGVLLSC) form a helical membrane-spanning segment. Residues 185–211 (SCPRKTTSYPTPRPYPKPTPSSGKDYV) lie on the Cytoplasmic side of the membrane. Positions 190-211 (TTSYPTPRPYPKPTPSSGKDYV) are disordered. An interactions with TJP1, TJP2, TJP3 and PATJ region spans residues 210 to 211 (YV).

This sequence belongs to the claudin family. In terms of assembly, can form homo- and heteropolymers with other CLDN. Homopolymers interact with CLDN3, but not CLDN2, homopolymers. Directly interacts with TJP1/ZO-1, TJP2/ZO-2 and TJP3/ZO-3. Interacts with MPDZ and PATJ. Interacts with OCLN, CD81, CLDN4, CLDN6 and CLDN9. In terms of tissue distribution, detected in epidermis and liver (at protein level). Widely expressed, with highest levels in liver and kidney.

The protein localises to the cell junction. It localises to the tight junction. Its subcellular location is the cell membrane. The protein resides in the basolateral cell membrane. In terms of biological role, claudins function as major constituents of the tight junction complexes that regulate the permeability of epithelia. While some claudin family members play essential roles in the formation of impermeable barriers, others mediate the permeability to ions and small molecules. Often, several claudin family members are coexpressed and interact with each other, and this determines the overall permeability. CLDN1 is required to prevent the paracellular diffusion of small molecules through tight junctions in the epidermis and is required for the normal barrier function of the skin. Required for normal water homeostasis and to prevent excessive water loss through the skin, probably via an indirect effect on the expression levels of other proteins, since CLDN1 itself seems to be dispensable for water barrier formation in keratinocyte tight junctions. The chain is Claudin-1 (Cldn1) from Mus musculus (Mouse).